A 158-amino-acid chain; its full sequence is MKFGCLSFRQPYAGFVLNGIKTVETRWRPLLSSQRNCTIAVHIAHRDWEGDAWRELLVERLGMTPAQIQALLRKGEKFGRGVIAGLVDIGETLQCPEDLTPDEVVELENQAVLTNLKQKYLTVISNPRWLLEPIPRKGGKDVFQVDIPEHLIPLGHEV.

An ASCH domain is found at 6–92; that stretch reads LSFRQPYAGF…IAGLVDIGET (87 aa).

The protein belongs to the EOLA family. As to quaternary structure, interacts with MT2A. In terms of tissue distribution, expressed primarily in heart, skeletal muscle, kidney, liver and placenta. Relatively high level of expression in spleen, colon and small intestine. Almost no expression in brain, thymus, lung and peripheral blood leukocytes. Expressed in epithelial cells (at protein level).

May play a role in cell protection during the inflammatory response. In epithelial cells, negatively regulates IL6 production and apoptosis through the regulation of MT2A expression. The sequence is that of Protein EOLA1 from Homo sapiens (Human).